The chain runs to 428 residues: Glutamate-1-semialdehyde 2,1-aminomutase (428 aa).

Position 267 is an N6-(pyridoxal phosphate)lysine (Lys267).

Belongs to the class-III pyridoxal-phosphate-dependent aminotransferase family. HemL subfamily. Homodimer. It depends on pyridoxal 5'-phosphate as a cofactor.

The protein localises to the cytoplasm. It carries out the reaction (S)-4-amino-5-oxopentanoate = 5-aminolevulinate. It functions in the pathway porphyrin-containing compound metabolism; protoporphyrin-IX biosynthesis; 5-aminolevulinate from L-glutamyl-tRNA(Glu): step 2/2. The chain is Glutamate-1-semialdehyde 2,1-aminomutase from Pelobacter propionicus (strain DSM 2379 / NBRC 103807 / OttBd1).